Consider the following 266-residue polypeptide: Small ribosomal subunit protein uS2 (266 aa).

Residues 229–254 (RTSDKEADTTTEEVAQEEVTDTKADE) form a disordered region. A compositionally biased stretch (acidic residues) spans 237 to 247 (TTTEEVAQEEV).

Belongs to the universal ribosomal protein uS2 family.

The chain is Small ribosomal subunit protein uS2 from Flavobacterium psychrophilum (strain ATCC 49511 / DSM 21280 / CIP 103535 / JIP02/86).